The chain runs to 134 residues: Protein X (134 aa).

Residues 25-48 are disordered; it reads SRGRPVSGPFGPLPSPSSSAVPAD. A compositionally biased stretch (low complexity) spans 29 to 47; the sequence is PVSGPFGPLPSPSSSAVPA. The interval 68-117 is mitochondrial targeting sequence; the sequence is PCALRLTSARRMETTVNAHQVLPKVLHKRTLGLSAMSTTDLEAYFKDCLF.

It belongs to the orthohepadnavirus protein X family. May form homodimer. May interact with host CEBPA, CFLAR, CREB1, DDB1, E4F1, HBXIP, HSPD1/HSP60, NFKBIA, POLR2E and SMAD4. Interacts with host SMC5-SMC6 complex and induces its degradation. Interacts with host TRPC4AP; leading to prevent ubiquitination of TRPC4AP. Interacts with host PLSCR1; this interaction promotes ubiquitination and degradation of HBx and impairs HBx-mediated cell proliferation. A fraction may be phosphorylated in insect cells and HepG2 cells, a human hepatoblastoma cell line. Phosphorylated in vitro by host protein kinase C or mitogen-activated protein kinase. N-acetylated in insect cells.

It localises to the host cytoplasm. It is found in the host nucleus. The protein localises to the host mitochondrion. Functionally, multifunctional protein that plays a role in silencing host antiviral defenses and promoting viral transcription. Does not seem to be essential for HBV infection. May be directly involved in development of cirrhosis and liver cancer (hepatocellular carcinoma). Most of cytosolic activities involve modulation of cytosolic calcium. The effect on apoptosis is controversial depending on the cell types in which the studies have been conducted. May induce apoptosis by localizing in mitochondria and causing loss of mitochondrial membrane potential. May also modulate apoptosis by binding host CFLAR, a key regulator of the death-inducing signaling complex (DISC). Promotes viral transcription by using the host E3 ubiquitin ligase DDB1 to target the SMC5-SMC6 complex to proteasomal degradation. This host complex would otherwise bind to viral episomal DNA, and prevents its transcription. Moderately stimulates transcription of many different viral and cellular transcription elements. Promoters and enhancers stimulated by HBx contain DNA binding sites for NF-kappa-B, AP-1, AP-2, c-EBP, ATF/CREB, or the calcium-activated factor NF-AT. In Homo sapiens (Human), this protein is Protein X.